A 600-amino-acid chain; its full sequence is Chaperonin 60 subunit beta 1, chloroplastic (600 aa).

A compositionally biased stretch (polar residues) spans 1-12 (MASTFTATSSIG). Positions 1-23 (MASTFTATSSIGSMVAPNGHKSD) are disordered. A chloroplast-targeting transit peptide spans 1–54 (MASTFTATSSIGSMVAPNGHKSDKKLISKLSSSSFGRRQSVCPRPRRSSSAIVC). 2 positions are modified to phosphoserine: Ser-101 and Ser-478.

Belongs to the chaperonin (HSP60) family. Part of the Cpn60 complex composed of 7 alpha and 7 beta subunits. Can also form a complex composed of 14 beta subunits only. Both complexes show ATPase activity. The Cpn60 complex interacts with the Cpn10 complex. Interacts with RAB during heat stress. Expressed in leaves, stems, petioles and flowers.

The protein resides in the plastid. It localises to the chloroplast stroma. Functionally, binds RuBisCO small and large subunits and is implicated in the assembly of the enzyme oligomer. Involved in protein assisted folding. Required for proper plastid division. In Arabidopsis thaliana (Mouse-ear cress), this protein is Chaperonin 60 subunit beta 1, chloroplastic (CPN60B1).